A 224-amino-acid chain; its full sequence is uncharacterized protein (224 aa).

The next 4 helical transmembrane spans lie at 25 to 45 (ALAW…IYGI), 56 to 76 (VFLI…VILP), 107 to 127 (ELFL…YFFV), and 149 to 169 (IFVK…VVYF).

It is found in the cell membrane. This is an uncharacterized protein from Mycoplasma pneumoniae (strain ATCC 29342 / M129 / Subtype 1) (Mycoplasmoides pneumoniae).